The chain runs to 508 residues: Photosystem II CP47 reaction center protein (508 aa).

The next 6 membrane-spanning stretches (helical) occupy residues 21–36 (AVHIMHTALVAGWAGS), 101–115 (ILFSGLCFLAAIWHW), 140–156 (GIHLFLSGLACFGFGAF), 203–218 (IAAGTLGILAGLFHLS), 237–252 (VLSSSIAAVFFAAFVV), and 457–472 (SFALLFFFGHIWHGAR).

It belongs to the PsbB/PsbC family. PsbB subfamily. As to quaternary structure, PSII is composed of 1 copy each of membrane proteins PsbA, PsbB, PsbC, PsbD, PsbE, PsbF, PsbH, PsbI, PsbJ, PsbK, PsbL, PsbM, PsbT, PsbX, PsbY, PsbZ, Psb30/Ycf12, at least 3 peripheral proteins of the oxygen-evolving complex and a large number of cofactors. It forms dimeric complexes. Requires Binds multiple chlorophylls. PSII binds additional chlorophylls, carotenoids and specific lipids. as cofactor.

It is found in the plastid. The protein localises to the chloroplast thylakoid membrane. Functionally, one of the components of the core complex of photosystem II (PSII). It binds chlorophyll and helps catalyze the primary light-induced photochemical processes of PSII. PSII is a light-driven water:plastoquinone oxidoreductase, using light energy to abstract electrons from H(2)O, generating O(2) and a proton gradient subsequently used for ATP formation. The chain is Photosystem II CP47 reaction center protein from Oenothera biennis (German evening primrose).